The chain runs to 260 residues: Aspartate/glutamate leucyltransferase (260 aa).

Positions 241 to 251 (DRLPEEGDRGP) are enriched in basic and acidic residues. The tract at residues 241 to 260 (DRLPEEGDRGPARFPASLTE) is disordered.

This sequence belongs to the R-transferase family. Bpt subfamily.

It localises to the cytoplasm. It catalyses the reaction N-terminal L-glutamyl-[protein] + L-leucyl-tRNA(Leu) = N-terminal L-leucyl-L-glutamyl-[protein] + tRNA(Leu) + H(+). The catalysed reaction is N-terminal L-aspartyl-[protein] + L-leucyl-tRNA(Leu) = N-terminal L-leucyl-L-aspartyl-[protein] + tRNA(Leu) + H(+). Functionally, functions in the N-end rule pathway of protein degradation where it conjugates Leu from its aminoacyl-tRNA to the N-termini of proteins containing an N-terminal aspartate or glutamate. The sequence is that of Aspartate/glutamate leucyltransferase from Gluconacetobacter diazotrophicus (strain ATCC 49037 / DSM 5601 / CCUG 37298 / CIP 103539 / LMG 7603 / PAl5).